The sequence spans 305 residues: Fatty acid elongase 1 (305 aa).

The next 7 helical transmembrane spans lie at Met24–Ile44, Val80–Val100, Phe129–Val149, Phe158–Gly178, Ile183–Ala203, Tyr217–Leu237, and Ile257–Tyr277. The HxxHH motif motif lies at His160–His164. His163 functions as the Nucleophile in the catalytic mechanism. The tract at residues Pro284–Lys305 is disordered. Residues Gly288–Ser299 show a composition bias toward polar residues. Residue Asn297 is glycosylated (N-linked (GlcNAc...) asparagine).

This sequence belongs to the ELO family.

The protein resides in the endoplasmic reticulum membrane. The catalysed reaction is an acyl-CoA + malonyl-CoA + H(+) = a 3-oxoacyl-CoA + CO2 + CoA. The protein operates within lipid metabolism; fatty acid biosynthesis. In terms of biological role, involved in the synthesis of fatty acids. Elongates C4 fatty acids to C10. The sequence is that of Fatty acid elongase 1 from Trypanosoma brucei brucei (strain 927/4 GUTat10.1).